The sequence spans 100 residues: NADH-quinone oxidoreductase subunit K 2 (100 aa).

Transmembrane regions (helical) follow at residues 4 to 24 (LNNY…GVLV), 29 to 49 (IVIF…FIAF), and 60 to 80 (IFVF…LALM).

Belongs to the complex I subunit 4L family. In terms of assembly, NDH-1 is composed of 14 different subunits. Subunits NuoA, H, J, K, L, M, N constitute the membrane sector of the complex.

The protein resides in the cell inner membrane. It catalyses the reaction a quinone + NADH + 5 H(+)(in) = a quinol + NAD(+) + 4 H(+)(out). Functionally, NDH-1 shuttles electrons from NADH, via FMN and iron-sulfur (Fe-S) centers, to quinones in the respiratory chain. The immediate electron acceptor for the enzyme in this species is believed to be ubiquinone. Couples the redox reaction to proton translocation (for every two electrons transferred, four hydrogen ions are translocated across the cytoplasmic membrane), and thus conserves the redox energy in a proton gradient. This chain is NADH-quinone oxidoreductase subunit K 2, found in Geotalea uraniireducens (strain Rf4) (Geobacter uraniireducens).